The chain runs to 204 residues: Ribosome maturation factor RimP (204 aa).

The interval 176-204 is disordered; sequence GNFDESQFDEIEESEGEEADEAEQPPTKH. Acidic residues predominate over residues 181–198; that stretch reads SQFDEIEESEGEEADEAE.

This sequence belongs to the RimP family.

The protein localises to the cytoplasm. Required for maturation of 30S ribosomal subunits. This Cereibacter sphaeroides (strain ATCC 17029 / ATH 2.4.9) (Rhodobacter sphaeroides) protein is Ribosome maturation factor RimP.